Consider the following 338-residue polypeptide: MHIAALHQPSQVQLNQDGNLKHFLTIEGLSKENLTKILDTAQSFLDDNNNLINRPLLEGRTVMNLFFENSTRTRTTFEAAAKRLSANVLNIDIARSSTSKGETLRDTLWNLEAMAADIFVVRHSSSGAAHFIAKDVCPKVAIINAGDGRHAHPTQAMLDMLTIRREMKKPFEDLSVAIIGDIKHSRVARSDVAALQTLGCKDIRVIAPNTLLPVGFSEYGDHVRLFNNMDEGITGCDVIIALRIQNERIDSPALSSQSEFYRMYGLNKERLSLAKPDCIVMHPGPMNRGVEIDSSIADGEQSVILKQVTNGIAVRMAVLALSMQGQLQEQGLIDAIAL.

R72 and T73 together coordinate carbamoyl phosphate. Position 100 (K100) interacts with L-aspartate. Positions 122, 152, and 155 each coordinate carbamoyl phosphate. L-aspartate-binding residues include R186 and R243. Positions 284 and 285 each coordinate carbamoyl phosphate.

This sequence belongs to the aspartate/ornithine carbamoyltransferase superfamily. ATCase family. In terms of assembly, heterododecamer (2C3:3R2) of six catalytic PyrB chains organized as two trimers (C3), and six regulatory PyrI chains organized as three dimers (R2).

It catalyses the reaction carbamoyl phosphate + L-aspartate = N-carbamoyl-L-aspartate + phosphate + H(+). It participates in pyrimidine metabolism; UMP biosynthesis via de novo pathway; (S)-dihydroorotate from bicarbonate: step 2/3. Catalyzes the condensation of carbamoyl phosphate and aspartate to form carbamoyl aspartate and inorganic phosphate, the committed step in the de novo pyrimidine nucleotide biosynthesis pathway. The sequence is that of Aspartate carbamoyltransferase catalytic subunit from Acinetobacter baumannii (strain SDF).